The primary structure comprises 431 residues: Adenylosuccinate synthetase (431 aa).

Residues 12 to 18 and 40 to 42 contribute to the GTP site; these read GDEGKGK and GHT. D13 (proton acceptor) is an active-site residue. Residues D13 and G40 each coordinate Mg(2+). IMP-binding positions include 13–16, 38–41, T131, R145, Q225, T240, and R304; these read DEGK and NAGH. The Proton donor role is filled by H41. 300 to 306 is a binding site for substrate; sequence TVTGRKR. GTP-binding positions include R306, 332 to 334, and 414 to 416; these read KLD and STS.

Belongs to the adenylosuccinate synthetase family. As to quaternary structure, homodimer. Mg(2+) serves as cofactor.

It localises to the cytoplasm. The catalysed reaction is IMP + L-aspartate + GTP = N(6)-(1,2-dicarboxyethyl)-AMP + GDP + phosphate + 2 H(+). Its pathway is purine metabolism; AMP biosynthesis via de novo pathway; AMP from IMP: step 1/2. In terms of biological role, plays an important role in the de novo pathway of purine nucleotide biosynthesis. Catalyzes the first committed step in the biosynthesis of AMP from IMP. The chain is Adenylosuccinate synthetase from Roseobacter denitrificans (strain ATCC 33942 / OCh 114) (Erythrobacter sp. (strain OCh 114)).